Reading from the N-terminus, the 149-residue chain is MSDPIKLHDLRPAPGAKKAKTRVGRGEASKGKTAGRGTKGTKARKQVSAAFEGGQMPLHMRLPKLKGFKNPAKVTYQVVNVSDLEKAFSNGGDVTVADIVAAGLARKNQPVKVLGNGEISVKLNVTANKFSGSAKQKIEAAGGTVTEAK.

Residues Met1–Arg11 show a composition bias toward basic and acidic residues. The interval Met1–Arg44 is disordered.

The protein belongs to the universal ribosomal protein uL15 family. In terms of assembly, part of the 50S ribosomal subunit.

Binds to the 23S rRNA. This is Large ribosomal subunit protein uL15 from Corynebacterium jeikeium (strain K411).